A 219-amino-acid chain; its full sequence is Ropporin-1-like protein (219 aa).

Positions 17-54 constitute an RIIa domain; the sequence is PELPDILKQFTKAAIRTQPHDLLQWSAAYFDSLSKGEP.

The protein belongs to the ropporin family. In terms of assembly, component of axonemal radial spoke complexes.

The protein localises to the cell projection. It localises to the cilium. Its subcellular location is the flagellum. In terms of biological role, functions as part of axonemal radial spoke complexes that play an important part in the motility of sperm and cilia. Important for male fertility. Involved in fibrous sheath integrity and sperm motility, plays a role in PKA-dependent signaling processes required for spermatozoa capacitation. The polypeptide is Ropporin-1-like protein (ropn1l) (Xenopus laevis (African clawed frog)).